A 497-amino-acid polypeptide reads, in one-letter code: MGQLKPQKNVYAVIDLGSNSFHMLIAKSIAGGLQTIGRVKRKVRLAAGLDIDNVLSSEAMHRGWECLALFAERLQDIPKQNITIVATATLRLASNADVFKAQAEKILGHKVNVISGELEARTIYKGVAHTSSCTGSQLVIDIGGASTEVIIGKNFDALLYKSLNIGCVTYLERYFKDCKLSNANFNTAIKAARTVIDEIASEYKVKGWQIASGASGTVQAIQEIMIAQNLDELLTLEKLYTIKKQSIAYKTIAALDLPGLSEDRRLVFVSGLAILIALFESLEIEKMGLAGGALREGVLYSMLPELHNSDIRKRTIDGFIDRYHVDQKQASRVASLVLNLASEVNESWPIKALNGLPLLTAVAQLHEIGLLIEYKQYHKHSAYILKNTEMPGFSQSEHKVIVAVAKGHRSDLQKGYFDSLGANSVLAQYLVRLIRIAVILCMRRQDDVLPEFAITVKDDVLNLQFENDWLKNHPLMASELQQESKQQAKLGWKLIVN.

This sequence belongs to the GppA/Ppx family. GppA subfamily.

The enzyme catalyses guanosine 3'-diphosphate 5'-triphosphate + H2O = guanosine 3',5'-bis(diphosphate) + phosphate + H(+). It participates in purine metabolism; ppGpp biosynthesis; ppGpp from GTP: step 2/2. Catalyzes the conversion of pppGpp to ppGpp. Guanosine pentaphosphate (pppGpp) is a cytoplasmic signaling molecule which together with ppGpp controls the 'stringent response', an adaptive process that allows bacteria to respond to amino acid starvation, resulting in the coordinated regulation of numerous cellular activities. This chain is Guanosine-5'-triphosphate,3'-diphosphate pyrophosphatase, found in Pseudoalteromonas translucida (strain TAC 125).